We begin with the raw amino-acid sequence, 109 residues long: Biphenyl dioxygenase system ferredoxin subunit (109 aa).

Residues 4–100 form the Rieske domain; that stretch reads TRVCDRRDVP…IRIEDNDVLV (97 aa). [2Fe-2S] cluster-binding residues include Cys-43, His-45, Cys-63, and His-66.

This sequence belongs to the bacterial ring-hydroxylating dioxygenase ferredoxin component family. This dioxygenase system consists of four proteins: the two subunits of the hydroxylase component (BphA and BphE), a ferredoxin (BphF) and a ferredoxin reductase (BphG).

Functionally, this protein seems to be a 2Fe-2S ferredoxin. This is Biphenyl dioxygenase system ferredoxin subunit (bphF) from Paraburkholderia xenovorans (strain LB400).